A 416-amino-acid polypeptide reads, in one-letter code: Lactose permease (416 aa).

Topologically, residues 1-13 are cytoplasmic; the sequence is MKLSELAPRERHN. A helical transmembrane segment spans residues 14–34; it reads FIYFMLFFFFYYFIMSAYFPF. Residues 35–50 are Periplasmic-facing; the sequence is FPVWLAEVNHLTKTET. The helical transmembrane segment at 51–71 threads the bilayer; sequence GIVFSCISLFAIIFQPVFGLI. At 72–80 the chain is on the cytoplasmic side; that stretch reads SDKLGLRKH. The helical transmembrane segment at 81–101 threads the bilayer; it reads LLWTITILLILFAPFFIFVFS. Position 102 (P102) is a topological domain, periplasmic. A helical transmembrane segment spans residues 103–123; that stretch reads LLQMNIMAGALVGGVYLGIVF. Topologically, residues 124-149 are cytoplasmic; sequence SSRSGAVEAYIERVSRANRFEYGKVR. 2 helical membrane-spanning segments follow: residues 150–170 and 171–191; these read VSGC…FSID and PNIT…LLWV. The Cytoplasmic segment spans residues 192–223; it reads SKPESSNSAEVIDALGANRQAFSMRTAAELFR. The helical transmembrane segment at 224-244 threads the bilayer; it reads MPRFWGFIIYVVGVASVYDVF. The Periplasmic portion of the chain corresponds to 245–267; sequence DQQFANFFKGFFSSPQRGTEVFG. The chain crosses the membrane as a helical span at residues 268 to 288; that stretch reads FVTTGGELLNALIMFCAPAII. The Cytoplasmic portion of the chain corresponds to 289–295; that stretch reads NRIGAKN. The next 2 membrane-spanning stretches (helical) occupy residues 296-316 and 317-337; these read ALLI…FATS and AVEV…LLVG. The Cytoplasmic segment spans residues 338-353; it reads TFKYISSAFKGKLSAT. A helical membrane pass occupies residues 354–374; it reads LFLIGFNLSKQLSSVVLSAWV. The Periplasmic segment spans residues 375–384; the sequence is GRMYDTVGFH. A helical membrane pass occupies residues 385–405; that stretch reads QAYLILGCITLSFTVISLFTL. Residues 406 to 416 lie on the Cytoplasmic side of the membrane; sequence KGSKTLLPATA.

The protein belongs to the major facilitator superfamily. Oligosaccharide:H(+) symporter (OHS) (TC 2.A.1.5) family.

It is found in the cell inner membrane. The enzyme catalyses lactose(in) + H(+)(in) = lactose(out) + H(+)(out). Its function is as follows. Responsible for transport of beta-galactosides into the cell, with the concomitant import of a proton (symport system). The chain is Lactose permease (lacY) from Klebsiella oxytoca.